Here is a 261-residue protein sequence, read N- to C-terminus: Ribonuclease 3 (261 aa).

In terms of domain architecture, RNase III spans 20–144; it reads YFALYRMLGF…FIGAIYLDKG (125 aa). Glu-62 is a binding site for Mg(2+). Asp-66 is a catalytic residue. Mg(2+) contacts are provided by Asn-130 and Glu-133. The active site involves Glu-133. In terms of domain architecture, DRBM spans 172–241; it reads NFKSKLFEWC…SQMTWRKIRT (70 aa).

The protein belongs to the ribonuclease III family. Homodimer. It depends on Mg(2+) as a cofactor.

The protein localises to the cytoplasm. The catalysed reaction is Endonucleolytic cleavage to 5'-phosphomonoester.. Functionally, digests double-stranded RNA. Involved in the processing of primary rRNA transcript to yield the immediate precursors to the large and small rRNAs (23S and 16S). Processes some mRNAs, and tRNAs when they are encoded in the rRNA operon. Processes pre-crRNA and tracrRNA of type II CRISPR loci if present in the organism. This is Ribonuclease 3 from Azobacteroides pseudotrichonymphae genomovar. CFP2.